Consider the following 604-residue polypeptide: Sulfite reductase [NADPH] flavoprotein alpha-component (604 aa).

Positions 65-203 (VTILYGSQTG…AAGQWHADVL (139 aa)) constitute a Flavodoxin-like domain. FMN is bound by residues 71-76 (SQTGNG), 118-121 (STHG), and 154-163 (LGDSSYEFFC). The FAD-binding FR-type domain maps to 236–453 (QNPYSAEVLV…VEPNKHFRLP (218 aa)). FAD-binding positions include threonine 324, leucine 358, 392–395 (RLYS), 410–412 (TVA), and 425–428 (GGAS). Residues 524–525 (SR), 530–534 (KIYVQ), and aspartate 566 each bind NADP(+). FAD is bound at residue tyrosine 604.

It belongs to the NADPH-dependent sulphite reductase flavoprotein subunit CysJ family. In the N-terminal section; belongs to the flavodoxin family. The protein in the C-terminal section; belongs to the flavoprotein pyridine nucleotide cytochrome reductase family. As to quaternary structure, alpha(8)-beta(8). The alpha component is a flavoprotein, the beta component is a hemoprotein. FAD is required as a cofactor. It depends on FMN as a cofactor.

The catalysed reaction is hydrogen sulfide + 3 NADP(+) + 3 H2O = sulfite + 3 NADPH + 4 H(+). It functions in the pathway sulfur metabolism; hydrogen sulfide biosynthesis; hydrogen sulfide from sulfite (NADPH route): step 1/1. In terms of biological role, component of the sulfite reductase complex that catalyzes the 6-electron reduction of sulfite to sulfide. This is one of several activities required for the biosynthesis of L-cysteine from sulfate. The flavoprotein component catalyzes the electron flow from NADPH -&gt; FAD -&gt; FMN to the hemoprotein component. This chain is Sulfite reductase [NADPH] flavoprotein alpha-component, found in Shewanella sp. (strain MR-4).